Here is an 88-residue protein sequence, read N- to C-terminus: Small ribosomal subunit protein uS15 (88 aa).

This sequence belongs to the universal ribosomal protein uS15 family. Part of the 30S ribosomal subunit. Forms a bridge to the 50S subunit in the 70S ribosome, contacting the 23S rRNA.

In terms of biological role, one of the primary rRNA binding proteins, it binds directly to 16S rRNA where it helps nucleate assembly of the platform of the 30S subunit by binding and bridging several RNA helices of the 16S rRNA. Forms an intersubunit bridge (bridge B4) with the 23S rRNA of the 50S subunit in the ribosome. In Pelobacter propionicus (strain DSM 2379 / NBRC 103807 / OttBd1), this protein is Small ribosomal subunit protein uS15.